A 184-amino-acid chain; its full sequence is Glutathione-regulated potassium-efflux system ancillary protein KefG (184 aa).

It belongs to the NAD(P)H dehydrogenase (quinone) family. KefG subfamily. As to quaternary structure, interacts with KefB.

The protein resides in the cell inner membrane. The enzyme catalyses a quinone + NADH + H(+) = a quinol + NAD(+). It catalyses the reaction a quinone + NADPH + H(+) = a quinol + NADP(+). Functionally, regulatory subunit of a potassium efflux system that confers protection against electrophiles. Required for full activity of KefB. The protein is Glutathione-regulated potassium-efflux system ancillary protein KefG of Yersinia enterocolitica serotype O:8 / biotype 1B (strain NCTC 13174 / 8081).